Reading from the N-terminus, the 152-residue chain is Ribosome maturation factor RimP (152 aa).

The protein belongs to the RimP family.

It localises to the cytoplasm. Its function is as follows. Required for maturation of 30S ribosomal subunits. The protein is Ribosome maturation factor RimP of Desulfitobacterium hafniense (strain DSM 10664 / DCB-2).